Here is a 245-residue protein sequence, read N- to C-terminus: 1-(5-phosphoribosyl)-5-[(5-phosphoribosylamino)methylideneamino] imidazole-4-carboxamide isomerase (245 aa).

The active-site Proton acceptor is D7. Residue D129 is the Proton donor of the active site.

The protein belongs to the HisA/HisF family.

The protein resides in the cytoplasm. The catalysed reaction is 1-(5-phospho-beta-D-ribosyl)-5-[(5-phospho-beta-D-ribosylamino)methylideneamino]imidazole-4-carboxamide = 5-[(5-phospho-1-deoxy-D-ribulos-1-ylimino)methylamino]-1-(5-phospho-beta-D-ribosyl)imidazole-4-carboxamide. The protein operates within amino-acid biosynthesis; L-histidine biosynthesis; L-histidine from 5-phospho-alpha-D-ribose 1-diphosphate: step 4/9. This is 1-(5-phosphoribosyl)-5-[(5-phosphoribosylamino)methylideneamino] imidazole-4-carboxamide isomerase from Shewanella loihica (strain ATCC BAA-1088 / PV-4).